The primary structure comprises 101 residues: DET1- and DDB1-associated protein 1 (101 aa).

Residues 67–101 (NAAKKRDQDQLEIGETSAPPRKIARTDSQEMSEDT) form a disordered region.

Belongs to the DDA1 family. In terms of assembly, component of numerous DCX (DDB1-CUL4-X-box) E3 ubiquitin-protein ligase complexes which consist of a core of DDB1, cullin-4 (CUL4A or CUL4B), DDA1 and RBX1.

Its pathway is protein modification; protein ubiquitination. Functions as a component of numerous distinct DCX (DDB1-CUL4-X-box) E3 ubiquitin-protein ligase complexes which mediate the ubiquitination and subsequent proteasomal degradation of target proteins. In the DCX complexes, acts as a scaffolding subunit required to stabilize the complex. The polypeptide is DET1- and DDB1-associated protein 1 (Xenopus tropicalis (Western clawed frog)).